The chain runs to 144 residues: Probable low molecular weight protein-tyrosine-phosphatase AmsI (144 aa).

The Nucleophile role is filled by cysteine 9. Arginine 15 is an active-site residue. Residue aspartate 115 is the Proton donor of the active site.

The protein belongs to the low molecular weight phosphotyrosine protein phosphatase family.

It catalyses the reaction O-phospho-L-tyrosyl-[protein] + H2O = L-tyrosyl-[protein] + phosphate. In terms of biological role, may function as a phosphatase required for amylovoran (an exopolysaccharide that functions as a virulence factor) production. The chain is Probable low molecular weight protein-tyrosine-phosphatase AmsI (amsI) from Erwinia amylovora (Fire blight bacteria).